Consider the following 120-residue polypeptide: Chaperonin GroEL (120 aa).

23–27 (DGTTT) serves as a coordination point for ATP.

Belongs to the chaperonin (HSP60) family. In terms of assembly, forms a cylinder of 14 subunits composed of two heptameric rings stacked back-to-back. Interacts with the co-chaperonin GroES.

Its subcellular location is the cytoplasm. The enzyme catalyses ATP + H2O + a folded polypeptide = ADP + phosphate + an unfolded polypeptide.. Together with its co-chaperonin GroES, plays an essential role in assisting protein folding. The GroEL-GroES system forms a nano-cage that allows encapsulation of the non-native substrate proteins and provides a physical environment optimized to promote and accelerate protein folding. In Mycobacterium asiaticum, this protein is Chaperonin GroEL.